We begin with the raw amino-acid sequence, 313 residues long: MSTREIRIATRKSALALWQAEYVKARLEQAHPGLLVTLVPMVSRGDKLLDAPLAKIGGKGLFVKELETALLDNEADIAVHSMKDVPMDFPEGLGLYCICEREDPRDAFVSNRFSSLDALPAGSIVGTSSLRRQAQLLARRPDLQIRFLRGNVNTRLAKLDAGEYDAIILAAAGLIRLGFEERITASISVDDSLPAGGQGAVGIECRSADSEIHALLAPLHHTDTADRVVAERALNKHLNGGCQVPIACYAVLEGEQLWLRGLVGQPSGGTLLMADARAPRASAETLGVQVAEDLLGQGAAAILKEVYGEAGHP.

Cys-242 is modified (S-(dipyrrolylmethanemethyl)cysteine).

The protein belongs to the HMBS family. Monomer. It depends on dipyrromethane as a cofactor.

The enzyme catalyses 4 porphobilinogen + H2O = hydroxymethylbilane + 4 NH4(+). It participates in porphyrin-containing compound metabolism; protoporphyrin-IX biosynthesis; coproporphyrinogen-III from 5-aminolevulinate: step 2/4. Its function is as follows. Tetrapolymerization of the monopyrrole PBG into the hydroxymethylbilane pre-uroporphyrinogen in several discrete steps. The polypeptide is Porphobilinogen deaminase (Pseudomonas putida (strain W619)).